Reading from the N-terminus, the 720-residue chain is Photosystem I P700 chlorophyll a apoprotein A1 (720 aa).

8 consecutive transmembrane segments (helical) span residues 61–84, 147–170, 186–210, 282–300, 337–360, 376–402, 424–446, and 522–540; these read VFSA…FHGA, LYCT…FHYH, LNHH…HVSL, TAHH…GHMY, WHAQ…HHMY, LSLF…IFMV, AIVS…LYIH, and FLVH…LILL. Cys-564 and Cys-573 together coordinate [4Fe-4S] cluster. 2 consecutive transmembrane segments (helical) span residues 580–601 and 655–677; these read HVFL…HFSW and LSAY…MFLF. Position 666 (His-666) interacts with chlorophyll a'. Met-674 and Tyr-682 together coordinate chlorophyll a. Phylloquinone is bound at residue Trp-683. Residues 715–720 traverse the membrane as a helical segment; the sequence is AVGVAH.

It belongs to the PsaA/PsaB family. The PsaA/B heterodimer binds the P700 chlorophyll special pair and subsequent electron acceptors. PSI consists of a core antenna complex that captures photons, and an electron transfer chain that converts photonic excitation into a charge separation. The eukaryotic PSI reaction center is composed of at least 11 subunits. Requires P700 is a chlorophyll a/chlorophyll a' dimer, A0 is one or more chlorophyll a, A1 is one or both phylloquinones and FX is a shared 4Fe-4S iron-sulfur center. as cofactor.

The protein localises to the plastid. Its subcellular location is the chloroplast thylakoid membrane. The enzyme catalyses reduced [plastocyanin] + hnu + oxidized [2Fe-2S]-[ferredoxin] = oxidized [plastocyanin] + reduced [2Fe-2S]-[ferredoxin]. Functionally, psaA and PsaB bind P700, the primary electron donor of photosystem I (PSI), as well as the electron acceptors A0, A1 and FX. PSI is a plastocyanin-ferredoxin oxidoreductase, converting photonic excitation into a charge separation, which transfers an electron from the donor P700 chlorophyll pair to the spectroscopically characterized acceptors A0, A1, FX, FA and FB in turn. Oxidized P700 is reduced on the lumenal side of the thylakoid membrane by plastocyanin. The chain is Photosystem I P700 chlorophyll a apoprotein A1 from Sequoia sempervirens (California redwood).